The chain runs to 466 residues: 3-isopropylmalate dehydratase large subunit (466 aa).

[4Fe-4S] cluster-binding residues include Cys347, Cys407, and Cys410.

Belongs to the aconitase/IPM isomerase family. LeuC type 1 subfamily. Heterodimer of LeuC and LeuD. The cofactor is [4Fe-4S] cluster.

The catalysed reaction is (2R,3S)-3-isopropylmalate = (2S)-2-isopropylmalate. It participates in amino-acid biosynthesis; L-leucine biosynthesis; L-leucine from 3-methyl-2-oxobutanoate: step 2/4. In terms of biological role, catalyzes the isomerization between 2-isopropylmalate and 3-isopropylmalate, via the formation of 2-isopropylmaleate. This is 3-isopropylmalate dehydratase large subunit from Citrobacter koseri (strain ATCC BAA-895 / CDC 4225-83 / SGSC4696).